A 316-amino-acid chain; its full sequence is 4-hydroxy-3-methylbut-2-enyl diphosphate reductase (316 aa).

Cys12 contributes to the [4Fe-4S] cluster binding site. Positions 43 and 81 each coordinate (2E)-4-hydroxy-3-methylbut-2-enyl diphosphate. 2 residues coordinate dimethylallyl diphosphate: His43 and His81. Isopentenyl diphosphate contacts are provided by His43 and His81. Cys103 contacts [4Fe-4S] cluster. His131 is a (2E)-4-hydroxy-3-methylbut-2-enyl diphosphate binding site. His131 is a binding site for dimethylallyl diphosphate. His131 is a binding site for isopentenyl diphosphate. Glu133 acts as the Proton donor in catalysis. Thr170 is a binding site for (2E)-4-hydroxy-3-methylbut-2-enyl diphosphate. A [4Fe-4S] cluster-binding site is contributed by Cys198. Positions 226, 228, and 271 each coordinate (2E)-4-hydroxy-3-methylbut-2-enyl diphosphate. 3 residues coordinate dimethylallyl diphosphate: Ser226, Asn228, and Ser271. Residues Ser226, Asn228, and Ser271 each coordinate isopentenyl diphosphate.

The protein belongs to the IspH family. [4Fe-4S] cluster serves as cofactor.

It catalyses the reaction isopentenyl diphosphate + 2 oxidized [2Fe-2S]-[ferredoxin] + H2O = (2E)-4-hydroxy-3-methylbut-2-enyl diphosphate + 2 reduced [2Fe-2S]-[ferredoxin] + 2 H(+). It carries out the reaction dimethylallyl diphosphate + 2 oxidized [2Fe-2S]-[ferredoxin] + H2O = (2E)-4-hydroxy-3-methylbut-2-enyl diphosphate + 2 reduced [2Fe-2S]-[ferredoxin] + 2 H(+). It participates in isoprenoid biosynthesis; dimethylallyl diphosphate biosynthesis; dimethylallyl diphosphate from (2E)-4-hydroxy-3-methylbutenyl diphosphate: step 1/1. Its pathway is isoprenoid biosynthesis; isopentenyl diphosphate biosynthesis via DXP pathway; isopentenyl diphosphate from 1-deoxy-D-xylulose 5-phosphate: step 6/6. Functionally, catalyzes the conversion of 1-hydroxy-2-methyl-2-(E)-butenyl 4-diphosphate (HMBPP) into a mixture of isopentenyl diphosphate (IPP) and dimethylallyl diphosphate (DMAPP). Acts in the terminal step of the DOXP/MEP pathway for isoprenoid precursor biosynthesis. The polypeptide is 4-hydroxy-3-methylbut-2-enyl diphosphate reductase (Bacillus thuringiensis (strain Al Hakam)).